Here is a 453-residue protein sequence, read N- to C-terminus: L-cysteine:1D-myo-inositol 2-amino-2-deoxy-alpha-D-glucopyranoside ligase (453 aa).

Cys-58 lines the Zn(2+) pocket. L-cysteinyl-5'-AMP-binding positions include 58-61 (CGIT), Thr-73, and 96-98 (NVT). A 'HIGH' region motif is present at residues 60–70 (ITPYDATHMGH). The 'ERGGDP' region signature appears at 221–226 (ERGGDP). L-cysteinyl-5'-AMP is bound at residue Trp-262. Zn(2+) is bound at residue Cys-266. 284 to 286 (GND) serves as a coordination point for L-cysteinyl-5'-AMP. His-291 contacts Zn(2+). Residue Val-317 coordinates L-cysteinyl-5'-AMP. The short motif at 323 to 327 (KMSKS) is the 'KMSKS' region element.

It belongs to the class-I aminoacyl-tRNA synthetase family. MshC subfamily. In terms of assembly, monomer. Zn(2+) serves as cofactor.

The catalysed reaction is 1D-myo-inositol 2-amino-2-deoxy-alpha-D-glucopyranoside + L-cysteine + ATP = 1D-myo-inositol 2-(L-cysteinylamino)-2-deoxy-alpha-D-glucopyranoside + AMP + diphosphate + H(+). Functionally, catalyzes the ATP-dependent condensation of GlcN-Ins and L-cysteine to form L-Cys-GlcN-Ins. The sequence is that of L-cysteine:1D-myo-inositol 2-amino-2-deoxy-alpha-D-glucopyranoside ligase from Rothia mucilaginosa (strain DY-18) (Stomatococcus mucilaginosus).